We begin with the raw amino-acid sequence, 194 residues long: Crossover junction endodeoxyribonuclease RuvC (194 aa).

Residues D7, E68, and D141 contribute to the active site. Residues D7, E68, and D141 each coordinate Mg(2+).

The protein belongs to the RuvC family. Homodimer which binds Holliday junction (HJ) DNA. The HJ becomes 2-fold symmetrical on binding to RuvC with unstacked arms; it has a different conformation from HJ DNA in complex with RuvA. In the full resolvosome a probable DNA-RuvA(4)-RuvB(12)-RuvC(2) complex forms which resolves the HJ. Requires Mg(2+) as cofactor.

It is found in the cytoplasm. The catalysed reaction is Endonucleolytic cleavage at a junction such as a reciprocal single-stranded crossover between two homologous DNA duplexes (Holliday junction).. Functionally, the RuvA-RuvB-RuvC complex processes Holliday junction (HJ) DNA during genetic recombination and DNA repair. Endonuclease that resolves HJ intermediates. Cleaves cruciform DNA by making single-stranded nicks across the HJ at symmetrical positions within the homologous arms, yielding a 5'-phosphate and a 3'-hydroxyl group; requires a central core of homology in the junction. The consensus cleavage sequence is 5'-(A/T)TT(C/G)-3'. Cleavage occurs on the 3'-side of the TT dinucleotide at the point of strand exchange. HJ branch migration catalyzed by RuvA-RuvB allows RuvC to scan DNA until it finds its consensus sequence, where it cleaves and resolves the cruciform DNA. The sequence is that of Crossover junction endodeoxyribonuclease RuvC from Mycolicibacterium vanbaalenii (strain DSM 7251 / JCM 13017 / BCRC 16820 / KCTC 9966 / NRRL B-24157 / PYR-1) (Mycobacterium vanbaalenii).